Here is a 186-residue protein sequence, read N- to C-terminus: Protein FAM9B (186 aa).

The segment at 1 to 93 is disordered; that stretch reads MAAWGKKHAG…KHALRKKQLK (93 aa). Basic and acidic residues-rich tracts occupy residues 10–27 and 34–58; these read GKDP…FTET and DEHG…KPED. Positions 66–93 are enriched in basic residues; the sequence is KRKRMKMDKTCSKTKNKSKHALRKKQLK.

It belongs to the XLR/SYCP3 family. In terms of tissue distribution, expressed in testis and ovary (at protein level).

It localises to the nucleus. Its subcellular location is the cytoplasm. The protein localises to the chromosome. Its function is as follows. May play a role in meiosis. This chain is Protein FAM9B, found in Homo sapiens (Human).